A 348-amino-acid polypeptide reads, in one-letter code: Dihydroorotase (348 aa).

The Zn(2+) site is built by His-17 and His-19. Residues His-19 to Arg-21 and Asn-45 contribute to the substrate site. Zn(2+)-binding residues include Lys-103, His-140, and His-178. The residue at position 103 (Lys-103) is an N6-carboxylysine. His-140 lines the substrate pocket. Leu-223 is a binding site for substrate. Asp-251 lines the Zn(2+) pocket. The active site involves Asp-251. Residues His-255 and Ala-267 each contribute to the substrate site.

This sequence belongs to the metallo-dependent hydrolases superfamily. DHOase family. Class II DHOase subfamily. As to quaternary structure, homodimer. Zn(2+) serves as cofactor.

It carries out the reaction (S)-dihydroorotate + H2O = N-carbamoyl-L-aspartate + H(+). It functions in the pathway pyrimidine metabolism; UMP biosynthesis via de novo pathway; (S)-dihydroorotate from bicarbonate: step 3/3. Functionally, catalyzes the reversible cyclization of carbamoyl aspartate to dihydroorotate. This Escherichia coli O157:H7 protein is Dihydroorotase.